The sequence spans 255 residues: ATP synthase subunit a 2 (255 aa).

5 helical membrane-spanning segments follow: residues 26–46 (SINI…IGVF), 86–106 (LIGP…SIDL), 131–151 (DVNV…GYTL), 205–225 (MIFI…SVPW), and 230–250 (ILIV…YLAM).

The protein belongs to the ATPase A chain family. As to quaternary structure, F-type ATPases have 2 components, CF(1) - the catalytic core - and CF(0) - the membrane proton channel. CF(1) has five subunits: alpha(3), beta(3), gamma(1), delta(1), epsilon(1). CF(0) has three main subunits: a(1), b(2) and c(9-12). The alpha and beta chains form an alternating ring which encloses part of the gamma chain. CF(1) is attached to CF(0) by a central stalk formed by the gamma and epsilon chains, while a peripheral stalk is formed by the delta and b chains.

The protein resides in the cell inner membrane. Key component of the proton channel; it plays a direct role in the translocation of protons across the membrane. This Photobacterium profundum (strain SS9) protein is ATP synthase subunit a 2.